The chain runs to 245 residues: 1-(5-phosphoribosyl)-5-[(5-phosphoribosylamino)methylideneamino] imidazole-4-carboxamide isomerase (245 aa).

The active-site Proton acceptor is the D7. Residue D129 is the Proton donor of the active site.

Belongs to the HisA/HisF family.

It is found in the cytoplasm. The catalysed reaction is 1-(5-phospho-beta-D-ribosyl)-5-[(5-phospho-beta-D-ribosylamino)methylideneamino]imidazole-4-carboxamide = 5-[(5-phospho-1-deoxy-D-ribulos-1-ylimino)methylamino]-1-(5-phospho-beta-D-ribosyl)imidazole-4-carboxamide. It functions in the pathway amino-acid biosynthesis; L-histidine biosynthesis; L-histidine from 5-phospho-alpha-D-ribose 1-diphosphate: step 4/9. The chain is 1-(5-phosphoribosyl)-5-[(5-phosphoribosylamino)methylideneamino] imidazole-4-carboxamide isomerase from Enterobacter sp. (strain 638).